The primary structure comprises 196 residues: ATP-dependent Clp protease proteolytic subunit (196 aa).

Catalysis depends on serine 96, which acts as the Nucleophile. The active site involves histidine 121.

It belongs to the peptidase S14 family. As to quaternary structure, fourteen ClpP subunits assemble into 2 heptameric rings which stack back to back to give a disk-like structure with a central cavity, resembling the structure of eukaryotic proteasomes.

It is found in the cytoplasm. It catalyses the reaction Hydrolysis of proteins to small peptides in the presence of ATP and magnesium. alpha-casein is the usual test substrate. In the absence of ATP, only oligopeptides shorter than five residues are hydrolyzed (such as succinyl-Leu-Tyr-|-NHMec, and Leu-Tyr-Leu-|-Tyr-Trp, in which cleavage of the -Tyr-|-Leu- and -Tyr-|-Trp bonds also occurs).. In terms of biological role, cleaves peptides in various proteins in a process that requires ATP hydrolysis. Has a chymotrypsin-like activity. Plays a major role in the degradation of misfolded proteins. This chain is ATP-dependent Clp protease proteolytic subunit, found in Streptococcus pneumoniae (strain ATCC 700669 / Spain 23F-1).